Consider the following 434-residue polypeptide: CCA tRNA nucleotidyltransferase 1, mitochondrial (434 aa).

A mitochondrion-targeting transit peptide spans 1–41; the sequence is MLRCLYHWHRPVLNRRWSRLCLPKQYLFTMKLQSPEFQSLF. Residues Gly-64 and Arg-67 each contribute to the ATP site. Positions 64 and 67 each coordinate CTP. Positions 77 and 79 each coordinate Mg(2+). ATP contacts are provided by Arg-151, Asp-194, Arg-197, Arg-200, and Arg-203. Residues Arg-151, Asp-194, Arg-197, Arg-200, and Arg-203 each coordinate CTP. Ser-400 carries the phosphoserine modification. Lys-402 carries the post-translational modification N6-acetyllysine.

This sequence belongs to the tRNA nucleotidyltransferase/poly(A) polymerase family. As to quaternary structure, monomer, and homodimer; disulfide-linked. It depends on Mg(2+) as a cofactor.

It is found in the mitochondrion. It localises to the cytoplasm. The protein resides in the nucleus. The catalysed reaction is a tRNA precursor + 2 CTP + ATP = a tRNA with a 3' CCA end + 3 diphosphate. It carries out the reaction a tRNA with a 3' CCA end + 2 CTP + ATP = a tRNA with a 3' CCACCA end + 3 diphosphate. In terms of biological role, nucleotidyltransferase that catalyzes the addition and repair of the essential 3'-terminal CCA sequence in tRNAs, which is necessary for the attachment of amino acids to the 3' terminus of tRNA molecules, using CTP and ATP as substrates. tRNA 3'-terminal CCA addition is required both for tRNA processing and repair. Promotes tRNA repair and recycling downstream of the ribosome-associated quality control (RQC) pathway by mediating addition of the tRNA 3'-terminal CCA following cleavage by ANKZF1 and repair by ELAC1. Also involved in tRNA surveillance by mediating tandem CCA addition to generate a CCACCA at the 3' terminus of unstable tRNAs and tRNA-like transcripts. While stable tRNAs receive only 3'-terminal CCA, unstable tRNAs beginning with GG are marked with CCACCA and rapidly degraded. The structural flexibility of RNA controls the choice between CCA versus CCACCA addition: following the first CCA addition cycle, nucleotide-binding to the active site triggers a clockwise screw motion, producing torque on the RNA. This ejects stable RNAs, whereas unstable RNAs are refolded while bound to the enzyme and subjected to a second CCA catalytic cycle. Functionally, adds 2 C residues (CC-) to the 3' terminus of tRNA molecules instead of a complete CCA end as isoform 1 does (in vitro). This Homo sapiens (Human) protein is CCA tRNA nucleotidyltransferase 1, mitochondrial.